The chain runs to 157 residues: Protein UXT (157 aa).

It belongs to the UXT family. In terms of assembly, homohexamer. Component of the PAQosome complex which is responsible for the biogenesis of several protein complexes and which consists of R2TP complex members RUVBL1, RUVBL2, RPAP3 and PIH1D1, URI complex members PFDN2, PFDN6, PDRG1, UXT and URI1 as well as ASDURF, POLR2E and DNAAF10/WDR92. Interacts with LRPPRC. Interacts with androgen receptor AR (via N-terminus). Interacts with estrogen receptor ESR1; the interaction relocalizes ESR1 from the nucleus to the cytoplasm. In the nucleus, interacts specifically with RELA (via RHD domain) and forms a dynamic complex with NF-kappa-B and is recruited to the NF-kappa-B enhanceosome upon stimulation. Interacts with MECOM. Interacts with URI1. Part of complex I composed of TNF-alpha receptor TNFRSF1A, TRADD, TRAF2 and RIPK1 formed in response to TNF-alpha stimulation. Within the complex, interacts (via TPQE motif) with TRAF2; the interaction prevents the recruitment of FADD and CASP8/caspase 8 to complex I. In terms of processing, ubiquitinated by E3 ubiquitin-protein ligase complex containing FBXO7; leading to proteasomal degradation. Ubiquitous. Expressed in prostate epithelial cells. Expressed in mammary epithelial cells. Highest levels in the heart, skeletal muscle, pancreas, kidney, liver, adrenal gland, peripheral blood leukocytes, lymph node, prostate, and thyroid and the lowest levels in bladder and uterus. Overexpressed in a number of tumor tissues.

It is found in the cytoplasm. The protein localises to the nucleus. The protein resides in the cytoskeleton. Its subcellular location is the microtubule organizing center. It localises to the centrosome. It is found in the spindle pole. Involved in gene transcription regulation. Acts in concert with the corepressor URI1 to regulate androgen receptor AR-mediated transcription. Together with URI1, associates with chromatin to the NKX3-1 promoter region. Negatively regulates the transcriptional activity of the estrogen receptor ESR1 by inducing its translocation into the cytoplasm. May act as nuclear chaperone that facilitates the formation of the NF-kappa-B enhanceosome and thus positively regulates NF-kappa-B transcription activity. Potential component of mitochondrial-associated LRPPRC, a multidomain organizer that potentially integrates mitochondria and the microtubular cytoskeleton with chromosome remodeling. Increasing concentrations of UXT contributes to progressive aggregation of mitochondria and cell death potentially through its association with LRPPRC. Suppresses cell transformation and it might mediate this function by interaction and inhibition of the biological activity of cell proliferation and survival stimulatory factors like MECOM. In terms of biological role, plays a role in protecting cells against TNF-alpha-induced apoptosis by preventing the recruitment of FADD and caspase 8 to the apoptotic complex I, composed of TRADD, TRAF2 and RIPK1/RIP. The chain is Protein UXT (UXT) from Homo sapiens (Human).